A 275-amino-acid chain; its full sequence is Polyamine aminopropyltransferase (275 aa).

Residues Glu-2 to Lys-235 form the PABS domain. An S-methyl-5'-thioadenosine-binding site is contributed by Gln-31. His-62 and Asp-86 together coordinate spermidine. S-methyl-5'-thioadenosine is bound by residues Glu-106 and Asp-137–Gly-138. The Proton acceptor role is filled by Asp-155. Asp-155–Glu-158 contacts spermidine. S-methyl-5'-thioadenosine is bound at residue Pro-162.

This sequence belongs to the spermidine/spermine synthase family. Homodimer or homotetramer.

The protein localises to the cytoplasm. The catalysed reaction is S-adenosyl 3-(methylsulfanyl)propylamine + putrescine = S-methyl-5'-thioadenosine + spermidine + H(+). It participates in amine and polyamine biosynthesis; spermidine biosynthesis; spermidine from putrescine: step 1/1. Functionally, catalyzes the irreversible transfer of a propylamine group from the amino donor S-adenosylmethioninamine (decarboxy-AdoMet) to putrescine (1,4-diaminobutane) to yield spermidine. The protein is Polyamine aminopropyltransferase of Bacillus cereus (strain ATCC 10987 / NRS 248).